The sequence spans 817 residues: LPS-assembly protein LptD (817 aa).

The N-terminal stretch at 1 to 45 (MDRLPLPHALHVPTHRPFAAPLPPRRLLARLAALMLCGVPLAVLA) is a signal peptide.

This sequence belongs to the LptD family. In terms of assembly, component of the lipopolysaccharide transport and assembly complex. Interacts with LptE and LptA.

It is found in the cell outer membrane. Functionally, together with LptE, is involved in the assembly of lipopolysaccharide (LPS) at the surface of the outer membrane. The protein is LPS-assembly protein LptD of Acidovorax sp. (strain JS42).